The primary structure comprises 100 residues: Urease subunit gamma (100 aa).

This sequence belongs to the urease gamma subunit family. Heterotrimer of UreA (gamma), UreB (beta) and UreC (alpha) subunits. Three heterotrimers associate to form the active enzyme.

It localises to the cytoplasm. The enzyme catalyses urea + 2 H2O + H(+) = hydrogencarbonate + 2 NH4(+). The protein operates within nitrogen metabolism; urea degradation; CO(2) and NH(3) from urea (urease route): step 1/1. This Paracidovorax citrulli (strain AAC00-1) (Acidovorax citrulli) protein is Urease subunit gamma.